A 580-amino-acid polypeptide reads, in one-letter code: DNA mismatch repair protein MutL (580 aa).

Belongs to the DNA mismatch repair MutL/HexB family.

This protein is involved in the repair of mismatches in DNA. It is required for dam-dependent methyl-directed DNA mismatch repair. May act as a 'molecular matchmaker', a protein that promotes the formation of a stable complex between two or more DNA-binding proteins in an ATP-dependent manner without itself being part of a final effector complex. In Chlamydia caviae (strain ATCC VR-813 / DSM 19441 / 03DC25 / GPIC) (Chlamydophila caviae), this protein is DNA mismatch repair protein MutL.